Reading from the N-terminus, the 175-residue chain is Ribosome maturation factor RimM (175 aa).

One can recognise a PRC barrel domain in the interval 96-175; that stretch reads EEDFYWRDLI…LIQVNWEPDF (80 aa).

This sequence belongs to the RimM family. In terms of assembly, binds ribosomal protein uS19.

It localises to the cytoplasm. An accessory protein needed during the final step in the assembly of 30S ribosomal subunit, possibly for assembly of the head region. Essential for efficient processing of 16S rRNA. May be needed both before and after RbfA during the maturation of 16S rRNA. It has affinity for free ribosomal 30S subunits but not for 70S ribosomes. This chain is Ribosome maturation factor RimM, found in Psychromonas ingrahamii (strain DSM 17664 / CCUG 51855 / 37).